A 195-amino-acid polypeptide reads, in one-letter code: Transcription factor 15 (195 aa).

A disordered region spans residues 44-65 (LEAARRGPGPGSGRRASNGAGP). A compositionally biased stretch (low complexity) spans 56–65 (GRRASNGAGP). Phosphoserine is present on serine 60. The bHLH domain occupies 70–122 (RQRQAANARERDRTQSVNTAFTALRTLIPTEPVDRKLSKIETLRLASSYIAHL).

In terms of assembly, heterodimer; efficient DNA binding requires dimerization with another bHLH protein, such as TCF3/E12. Interacts with MEOX2. As to expression, expressed in heart and skeletal muscle. Specifically expressed in a subpopulation of embryonic stem cells (ESCs), that are still undifferentiated but primed for ifferentiation. Expressed in hematopoietic stem cells (HSCs).

Its subcellular location is the nucleus. Its function is as follows. Early transcription factor that plays a key role in somitogenesis, paraxial mesoderm development and regulation of stem cell pluripotency. Essential for the mesenchymal to epithelial transition associated with somite formation. Required for somite morphogenesis, thereby regulating patterning of the axial skeleton and skeletal muscles. Required for proper localization of somite epithelium markers during the mesenchymal to epithelial transition. Also plays a key role in regulation of stem cell pluripotency. Promotes pluripotency exit of embryonic stem cells (ESCs) by priming ESCs for differentiation. Acts as a key regulator of self-renewal of hematopoietic stem cells (HSCs) by mediating HSCs quiescence and long-term self-renewal. Together with MEOX2, regulates transcription in heart endothelial cells to regulate fatty acid transport across heart endothelial cells. Acts by forming a heterodimer with another helix-loop-helix (bHLH) protein, such as TCF3/E12, that binds DNA on E-box motifs (5'-CANNTG-3') and activates transcription of target genes. This Mus musculus (Mouse) protein is Transcription factor 15.